The chain runs to 211 residues: Holliday junction resolvase RecU (211 aa).

Positions 95, 97, 110, and 129 each coordinate Mg(2+).

It belongs to the RecU family. It depends on Mg(2+) as a cofactor.

It localises to the cytoplasm. It carries out the reaction Endonucleolytic cleavage at a junction such as a reciprocal single-stranded crossover between two homologous DNA duplexes (Holliday junction).. Endonuclease that resolves Holliday junction intermediates in genetic recombination. Cleaves mobile four-strand junctions by introducing symmetrical nicks in paired strands. Promotes annealing of linear ssDNA with homologous dsDNA. Required for DNA repair, homologous recombination and chromosome segregation. This Lactobacillus acidophilus (strain ATCC 700396 / NCK56 / N2 / NCFM) protein is Holliday junction resolvase RecU.